Consider the following 119-residue polypeptide: Protein TusC (119 aa).

Belongs to the DsrF/TusC family. Heterohexamer, formed by a dimer of trimers. The hexameric TusBCD complex contains 2 copies each of TusB, TusC and TusD. The TusBCD complex interacts with TusE.

The protein resides in the cytoplasm. Functionally, part of a sulfur-relay system required for 2-thiolation of 5-methylaminomethyl-2-thiouridine (mnm(5)s(2)U) at tRNA wobble positions. This chain is Protein TusC, found in Photorhabdus laumondii subsp. laumondii (strain DSM 15139 / CIP 105565 / TT01) (Photorhabdus luminescens subsp. laumondii).